A 62-amino-acid polypeptide reads, in one-letter code: Amolopin-P1 (62 aa).

An N-terminal signal peptide occupies residues 1 to 22; sequence MFPMKKSLLLLFFFGPISLSFC. A propeptide spanning residues 23 to 44 is cleaved from the precursor; it reads DQERGADEEENGGEVTEQEVKR.

As to expression, expressed by the skin glands.

It localises to the secreted. Functionally, antimicrobial peptide with activity against Gram-positive bacteria. Has been tested against S.aureus (MIC=37.5 ug/mL), against B.pumilus (MIC=75.0 ug/mL), B.cereus (no activity detected). Does not show activity against Gram-negative bacteria (E.coli, B.dysenteriae, A.calcoaceticus, P.aeruginosa) and fungi (C.albicans). Does not show hemolytic activity against rabbit erythrocytes. In Amolops loloensis (Lolokou Sucker Frog), this protein is Amolopin-P1.